A 369-amino-acid chain; its full sequence is Septin-5 (369 aa).

Residue Thr-13 is modified to Phosphothreonine. Residues 41–314 (KGFDFTLMVA…ENYRAHCIQQ (274 aa)) enclose the Septin-type G domain. The segment at 51–58 (GESGLGKS) is G1 motif. Residues 51–58 (GESGLGKS), Thr-85, and Gly-111 contribute to the GTP site. The segment at 108–111 (DTPG) is G3 motif. Arg-168 is modified (omega-N-methylarginine). Residues 189 to 192 (AKAD) are G4 motif. 190 to 198 (KADCLVPSE) contributes to the GTP binding site. Position 225 is a phosphoserine (Ser-225). GTP contacts are provided by Gly-248 and Arg-263. Ser-327 is subject to Phosphoserine. Residue Thr-336 is modified to Phosphothreonine. The stretch at 338-369 (DAETEKLIRMKDEELRRMQEMLQRMKQQMQDQ) forms a coiled coil.

The protein belongs to the TRAFAC class TrmE-Era-EngA-EngB-Septin-like GTPase superfamily. Septin GTPase family. In terms of assembly, septins polymerize into heterooligomeric protein complexes that form filaments, and can associate with cellular membranes, actin filaments and microtubules. GTPase activity is required for filament formation. Interacts with SEPTIN2 and SEPTIN5. In platelets, associated with a complex containing STX4. Interacts with PRKN; this interaction leads to SEPTIN5 ubiquitination and degradation. Interacts with DYRK1A. Interacts with STX1A; in the cerebellar cortex. Phosphorylated by DYRK1A. In platelets, phosphorylated in response to thrombin, phorbol-12-myristate-13-acetate and collagen. As to expression, expressed at high levels in the CNS, as well as in heart and platelets (at protein level).

It is found in the cytoplasm. The protein localises to the cytoskeleton. Functionally, filament-forming cytoskeletal GTPase. May play a role in cytokinesis (Potential). May play a role in platelet secretion. The chain is Septin-5 from Homo sapiens (Human).